The primary structure comprises 342 residues: Protein rough sheath 2 homolog (342 aa).

HTH myb-type domains follow at residues 1–58 (MQPP…KNYL) and 59–113 (RPGI…EKQQ). DNA-binding regions (H-T-H motif) lie at residues 32–58 (WSLVSQRMNRPLHRDAKSCLERWKNYL) and 86–109 (WKKIAAEVPGRTAKRLGKWWEVFK). Residues 253–304 (RRREATEEFEAKMRALREEQAAAVERVEAEYREKMAGLRRDAEAKEQKMAEQ) adopt a coiled-coil conformation.

The protein resides in the nucleus. In terms of biological role, transcription factor required for normal cell differentiation. May interact with other proteins to repress the knox homeobox genes. The sequence is that of Protein rough sheath 2 homolog (RS2) from Oryza sativa subsp. japonica (Rice).